We begin with the raw amino-acid sequence, 246 residues long: MAGHSKWANIQHRKGKQDKLRSKLFSKLAKEITVAAKMGDPDPEKNPRLRLAVKEAKSNSMPKDVIDRAIKKSQGGDAENYDEIRYEGYGPNGIAIIVEAMTDNRNRTASNVRSYFTKYGGDLGQTGSVSFMFDRKGEILYKPDAGDADTVMMAAIEAGAEDVESDEDGHWIYTADTDLAEVSTALEASLGESEHAKLIWKPQAPTEIDLETATKLMKLIDALEEDDDVQNVTGNFDIPEEVAAQL.

Residues 1 to 21 (MAGHSKWANIQHRKGKQDKLR) form a disordered region.

The protein belongs to the TACO1 family.

It localises to the cytoplasm. This chain is Probable transcriptional regulatory protein Pden_1905, found in Paracoccus denitrificans (strain Pd 1222).